The primary structure comprises 560 residues: Chaperonin GroEL 2 (560 aa).

Residues 29–32 (TLGP), lysine 50, 86–90 (DGTTT), glycine 414, and aspartate 494 each bind ATP. The disordered stretch occupies residues 524-546 (EDEDDDDGGGGGGGGMPAGGAGG). Residues 532-546 (GGGGGGGMPAGGAGG) are compositionally biased toward gly residues.

It belongs to the chaperonin (HSP60) family. As to quaternary structure, forms a cylinder of 14 subunits composed of two heptameric rings stacked back-to-back. Interacts with the co-chaperonin GroES.

It localises to the cytoplasm. It catalyses the reaction ATP + H2O + a folded polypeptide = ADP + phosphate + an unfolded polypeptide.. Functionally, together with its co-chaperonin GroES, plays an essential role in assisting protein folding. The GroEL-GroES system forms a nano-cage that allows encapsulation of the non-native substrate proteins and provides a physical environment optimized to promote and accelerate protein folding. This Salinibacter ruber (strain DSM 13855 / M31) protein is Chaperonin GroEL 2.